A 228-amino-acid polypeptide reads, in one-letter code: Ribose-5-phosphate isomerase A (228 aa).

Residues threonine 27–threonine 30, aspartate 86–aspartate 89, and lysine 100–glycine 103 each bind substrate. Catalysis depends on glutamate 109, which acts as the Proton acceptor. Lysine 127 is a substrate binding site.

Belongs to the ribose 5-phosphate isomerase family. As to quaternary structure, homodimer.

It carries out the reaction aldehydo-D-ribose 5-phosphate = D-ribulose 5-phosphate. The protein operates within carbohydrate degradation; pentose phosphate pathway; D-ribose 5-phosphate from D-ribulose 5-phosphate (non-oxidative stage): step 1/1. Functionally, catalyzes the reversible conversion of ribose-5-phosphate to ribulose 5-phosphate. In Borreliella burgdorferi (strain ZS7) (Borrelia burgdorferi), this protein is Ribose-5-phosphate isomerase A.